The following is a 271-amino-acid chain: Putative carboxymethylenebutenolidase (271 aa).

Residues C147, D204, and H236 contribute to the active site.

It belongs to the dienelactone hydrolase family.

The enzyme catalyses 2-(5-oxo-2,5-dihydrofuran-2-ylidene)acetate + H2O = 4-oxohex-2-enedioate + H(+). This chain is Putative carboxymethylenebutenolidase (ysgA), found in Escherichia coli O157:H7.